Reading from the N-terminus, the 1588-residue chain is Paternally-expressed gene 3 protein (1588 aa).

Residues 46–128 (HQRFRNLIYV…TLLENYKEMY (83 aa)) form the SCAN box domain. 3 disordered regions span residues 128–230 (YQPE…ESYQ), 266–306 (DGHS…RRGI), and 319–349 (KFIK…MSDD). A compositionally biased stretch (acidic residues) spans 129-142 (QPEDDNNSDVTSDD). Composition is skewed to basic and acidic residues over residues 143 to 152 (DMTRNRRESS), 161 to 182 (SGDR…DRWS), 206 to 225 (FEMD…RSQD), and 295 to 306 (PEAKKSTHRRGI). 3 C2H2-type zinc fingers span residues 454–476 (YVCD…QIMH), 507–529 (FECK…RKIH), and 565–587 (YECR…QKIH). The segment covering 588–607 (FGDDKDNEREHERERERGET) has biased composition (basic and acidic residues). The disordered stretch occupies residues 588 to 610 (FGDDKDNEREHERERERGETFRP). Residues 627-649 (YECKVCGETFLHSSSLKEHQKIH) form a C2H2-type 4 zinc finger. Residues 838 to 930 (LVASKPPRSH…EFSVPSSNVR (93 aa)) form a disordered region. The span at 868–881 (LNDKRQKIPARENP) shows a compositional bias: basic and acidic residues. A C2H2-type 5 zinc finger spans residues 969–991 (YECQECGECFAHSSDLTEHQKIH). The tract at residues 1056-1104 (EKSHGEESQGENTDGEETHSEETHGQETIEDPVIQGSDMEDPQKDDPDD) is disordered. A compositionally biased stretch (basic and acidic residues) spans 1071–1082 (EETHSEETHGQE). 5 consecutive C2H2-type zinc fingers follow at residues 1107-1129 (YECE…QKVH), 1163-1185 (YECP…QRIH), 1225-1247 (IRCL…MRLH), 1282-1304 (FECA…VTVH), and 1332-1354 (YECK…KELH). Positions 1395 to 1415 (AEPEVEAAEPEVEAAEPEVEA) are enriched in acidic residues. The segment at 1395-1495 (AEPEVEAAEP…GIEDPEEGED (101 aa)) is disordered. Repeat copies occupy residues 1397 to 1403 (PEVEAAE), 1404 to 1410 (PEVEAAE), 1411 to 1417 (PEVEAAE), 1418 to 1422 (PNGEA), 1425 to 1429 (PDGEA), 1432 to 1436 (PIGEA), and 1439 to 1443 (PNGEA). The 3 X 7 AA repeat of P-E-V-E-A-A-E stretch occupies residues 1397-1417 (PEVEAAEPEVEAAEPEVEAAE). Residues 1418 to 1443 (PNGEAEGPDGEAAEPIGEAGQPNGEA) form a 4 X 5 AA repeat of P-X-G-E-A region. Acidic residues-rich tracts occupy residues 1449 to 1466 (DADE…ERAE) and 1475 to 1495 (PEGD…EGED). 2 C2H2-type zinc fingers span residues 1505 to 1527 (YDCH…LKTH) and 1564 to 1586 (FKCD…QNTH).

The protein belongs to the krueppel C2H2-type zinc-finger protein family. In terms of assembly, homodimer. Interacts with SIAH1A and SIAH2. Interacts with TRAF2.

The protein localises to the nucleus. It localises to the cytoplasm. Functionally, induces apoptosis in cooperation with SIAH1A. Acts as a mediator between p53/TP53 and BAX in a neuronal death pathway that is activated by DNA damage. Acts synergistically with TRAF2 and inhibits TNF induced apoptosis through activation of NF-kappa-B. This Pan troglodytes (Chimpanzee) protein is Paternally-expressed gene 3 protein (PEG3).